The sequence spans 868 residues: Pentatricopeptide repeat-containing protein At2g27610 (868 aa).

18 PPR repeats span residues 57–91 (DRES…GMEM), 92–126 (DCSI…GFLD), 127–157 (DVSV…MKER), 158–192 (NVVT…GTQP), 193–227 (NSFT…GLDK), 228–258 (TIPV…TEVK), 259–293 (SVVT…YVRL), 294–328 (SESS…GFLF), 329–359 (DQNI…IGCV), 361–395 (NVVS…GVRP), 396–426 (NEFT…NYER), 427–457 (SSTV…IDDK), 458–492 (DIVA…GIKP), 493–528 (NEFT…RLDS), 529–559 (SLCV…QREK), 560–594 (DLVS…KVKM), 595–625 (DGVT…MVRD), and 631–661 (TKEH…MPNP). Positions 666–741 (IWRTILAACR…EPGYSWIEVK (76 aa)) are type E motif. Residues 742 to 772 (NKTYSFLAGDRSHPLKDQIYMKLEDLSTRLK) form a type E(+) motif region. Residues 773–868 (DLGYEPDTSY…DGVCSCGDFW (96 aa)) form a type DYW motif region.

Belongs to the PPR family. PCMP-H subfamily.

The sequence is that of Pentatricopeptide repeat-containing protein At2g27610 (PCMP-H60) from Arabidopsis thaliana (Mouse-ear cress).